The primary structure comprises 150 residues: Small ribosomal subunit protein uS9 (150 aa).

The protein belongs to the universal ribosomal protein uS9 family.

This chain is Small ribosomal subunit protein uS9, found in Mycolicibacterium smegmatis (strain ATCC 700084 / mc(2)155) (Mycobacterium smegmatis).